Reading from the N-terminus, the 333-residue chain is Ketol-acid reductoisomerase (NADP(+)) (333 aa).

Positions A2–T182 constitute a KARI N-terminal Rossmann domain. NADP(+) is bound by residues Y25 to Q28, S51, S53, and D83 to Q86. H108 is a catalytic residue. An NADP(+)-binding site is contributed by G134. Residues T183–V328 enclose the KARI C-terminal knotted domain. Mg(2+) is bound by residues D191, E195, E227, and E231. Position 252 (S252) interacts with substrate.

Belongs to the ketol-acid reductoisomerase family. Requires Mg(2+) as cofactor.

It catalyses the reaction (2R)-2,3-dihydroxy-3-methylbutanoate + NADP(+) = (2S)-2-acetolactate + NADPH + H(+). It carries out the reaction (2R,3R)-2,3-dihydroxy-3-methylpentanoate + NADP(+) = (S)-2-ethyl-2-hydroxy-3-oxobutanoate + NADPH + H(+). It participates in amino-acid biosynthesis; L-isoleucine biosynthesis; L-isoleucine from 2-oxobutanoate: step 2/4. The protein operates within amino-acid biosynthesis; L-valine biosynthesis; L-valine from pyruvate: step 2/4. Functionally, involved in the biosynthesis of branched-chain amino acids (BCAA). Catalyzes an alkyl-migration followed by a ketol-acid reduction of (S)-2-acetolactate (S2AL) to yield (R)-2,3-dihydroxy-isovalerate. In the isomerase reaction, S2AL is rearranged via a Mg-dependent methyl migration to produce 3-hydroxy-3-methyl-2-ketobutyrate (HMKB). In the reductase reaction, this 2-ketoacid undergoes a metal-dependent reduction by NADPH to yield (R)-2,3-dihydroxy-isovalerate. This Streptomyces griseus subsp. griseus (strain JCM 4626 / CBS 651.72 / NBRC 13350 / KCC S-0626 / ISP 5235) protein is Ketol-acid reductoisomerase (NADP(+)).